A 531-amino-acid chain; its full sequence is Putative cysteine ligase BshC (531 aa).

The stretch at Lys447–Glu481 forms a coiled coil.

This sequence belongs to the BshC family.

This chain is Putative cysteine ligase BshC, found in Flavobacterium psychrophilum (strain ATCC 49511 / DSM 21280 / CIP 103535 / JIP02/86).